The primary structure comprises 92 residues: MTRSLKKNPFVANHLLKKIDKLNTKAEKEIIVTWSRASTIIPTMIGHTIGIHNGKEHLPIYITDRMVGHKLGEFAPTLNFRGHAKSDNRSRR.

This sequence belongs to the universal ribosomal protein uS19 family.

Its subcellular location is the plastid. The protein resides in the chloroplast. Its function is as follows. Protein S19 forms a complex with S13 that binds strongly to the 16S ribosomal RNA. In Coffea arabica (Arabian coffee), this protein is Small ribosomal subunit protein uS19c.